Here is a 601-residue protein sequence, read N- to C-terminus: Zinc finger protein 37 (601 aa).

Residues 1–70 form the KRAB domain; the sequence is MATPEPAESD…VRANKNSSSS (70 aa). Phosphothreonine is present on Thr-3. Ser-9 is subject to Phosphoserine. A compositionally biased stretch (polar residues) spans 30 to 43; sequence ETCSNPASMGNQDP. Positions 30-254 are disordered; the sequence is ETCSNPASMG…SKSDKAPGSG (225 aa). The span at 60-70 shows a compositional bias: low complexity; the sequence is SVRANKNSSSS. Residues 77-88 are compositionally biased toward polar residues; that stretch reads TGTSAKVQQDGA. 3 stretches are compositionally biased toward basic and acidic residues: residues 115–136, 164–174, and 183–238; these read KSSE…PSEK, KKPDTANEYRK, and VNRD…EKRK. Residues 257–279 form a C2H2-type 1 zinc finger; it reads YECNQCGKVLSHKQGLLDHQRTH. A C2H2-type 2; atypical zinc finger spans residues 285–303; it reads YECYECGIAFSQKSHLVVH. C2H2-type zinc fingers lie at residues 314-337, 343-365, 371-393, 399-421, 427-449, 455-477, 483-505, 511-533, 539-561, and 570-592; these read YECV…RISH, YKCN…IRSH, YECK…VRTH, YECN…MRIH, FECT…QRTH, YKCK…MRTH, FECN…QRVH, YECV…QRTH, FECY…QRSH, and YECV…MKTH.

It belongs to the krueppel C2H2-type zinc-finger protein family. As to expression, expressed in testes, brain, kidney, spleen, thymus, lung, and at low levels in liver.

It is found in the nucleus. In terms of biological role, may be involved in transcriptional regulation. This chain is Zinc finger protein 37 (Zfp37), found in Rattus norvegicus (Rat).